A 212-amino-acid polypeptide reads, in one-letter code: Pyridoxine/pyridoxamine 5'-phosphate oxidase (212 aa).

Substrate-binding positions include 8 to 11 and lysine 66; that span reads RRTY. FMN-binding positions include 61 to 66, 76 to 77, arginine 82, lysine 83, and glutamine 105; these read RIVLLK and FT. Substrate contacts are provided by tyrosine 123, arginine 127, and serine 131. FMN contacts are provided by residues 140–141 and tryptophan 184; that span reads QS. A substrate-binding site is contributed by 190 to 192; that stretch reads RLH. Arginine 194 is a binding site for FMN.

Belongs to the pyridoxamine 5'-phosphate oxidase family. In terms of assembly, homodimer. FMN is required as a cofactor.

The catalysed reaction is pyridoxamine 5'-phosphate + O2 + H2O = pyridoxal 5'-phosphate + H2O2 + NH4(+). It catalyses the reaction pyridoxine 5'-phosphate + O2 = pyridoxal 5'-phosphate + H2O2. The protein operates within cofactor metabolism; pyridoxal 5'-phosphate salvage; pyridoxal 5'-phosphate from pyridoxamine 5'-phosphate: step 1/1. It functions in the pathway cofactor metabolism; pyridoxal 5'-phosphate salvage; pyridoxal 5'-phosphate from pyridoxine 5'-phosphate: step 1/1. Catalyzes the oxidation of either pyridoxine 5'-phosphate (PNP) or pyridoxamine 5'-phosphate (PMP) into pyridoxal 5'-phosphate (PLP). The chain is Pyridoxine/pyridoxamine 5'-phosphate oxidase from Cupriavidus taiwanensis (strain DSM 17343 / BCRC 17206 / CCUG 44338 / CIP 107171 / LMG 19424 / R1) (Ralstonia taiwanensis (strain LMG 19424)).